A 313-amino-acid chain; its full sequence is Ribosomal RNA small subunit methyltransferase H (313 aa).

S-adenosyl-L-methionine is bound by residues 34-36, aspartate 53, phenylalanine 80, aspartate 101, and glutamine 108; that span reads GGH.

The protein belongs to the methyltransferase superfamily. RsmH family.

The protein resides in the cytoplasm. The enzyme catalyses cytidine(1402) in 16S rRNA + S-adenosyl-L-methionine = N(4)-methylcytidine(1402) in 16S rRNA + S-adenosyl-L-homocysteine + H(+). Functionally, specifically methylates the N4 position of cytidine in position 1402 (C1402) of 16S rRNA. The chain is Ribosomal RNA small subunit methyltransferase H from Lacticaseibacillus casei (strain BL23) (Lactobacillus casei).